Here is a 181-residue protein sequence, read N- to C-terminus: Transcription termination/antitermination protein NusG (181 aa).

The KOW domain maps to 130-161 (PGEMVRVNDGPFADFNGVVEEVDYEKSRLKVS).

This sequence belongs to the NusG family. Monomer. Interacts with the transcription termination factor Rho and with RNA polymerase.

Functionally, participates in transcription elongation, termination and antitermination. In the absence of Rho, increases the rate of transcription elongation by the RNA polymerase (RNAP), probably by partially suppressing pausing. In the presence of Rho, modulates most Rho-dependent termination events by interacting with the RNAP to render the complex more susceptible to the termination activity of Rho. May be required to overcome a kinetic limitation of Rho to function at certain terminators. Also involved in ribosomal RNA transcriptional antitermination. The protein is Transcription termination/antitermination protein NusG of Shigella flexneri.